The chain runs to 410 residues: Multifunctional CCA protein (410 aa).

Positions 8 and 11 each coordinate ATP. The CTP site is built by G8 and R11. Mg(2+) contacts are provided by D21 and D23. ATP-binding residues include R91, R138, and R141. CTP contacts are provided by R91, R138, and R141. Positions 229-347 constitute an HD domain; that stretch reads TGVHQEMVSD…AQLALVCEAD (119 aa).

The protein belongs to the tRNA nucleotidyltransferase/poly(A) polymerase family. Bacterial CCA-adding enzyme type 1 subfamily. Monomer. Can also form homodimers and oligomers. Mg(2+) is required as a cofactor. Requires Ni(2+) as cofactor.

The catalysed reaction is a tRNA precursor + 2 CTP + ATP = a tRNA with a 3' CCA end + 3 diphosphate. The enzyme catalyses a tRNA with a 3' CCA end + 2 CTP + ATP = a tRNA with a 3' CCACCA end + 3 diphosphate. Functionally, catalyzes the addition and repair of the essential 3'-terminal CCA sequence in tRNAs without using a nucleic acid template. Adds these three nucleotides in the order of C, C, and A to the tRNA nucleotide-73, using CTP and ATP as substrates and producing inorganic pyrophosphate. tRNA 3'-terminal CCA addition is required both for tRNA processing and repair. Also involved in tRNA surveillance by mediating tandem CCA addition to generate a CCACCA at the 3' terminus of unstable tRNAs. While stable tRNAs receive only 3'-terminal CCA, unstable tRNAs are marked with CCACCA and rapidly degraded. This Xanthomonas campestris pv. campestris (strain B100) protein is Multifunctional CCA protein.